We begin with the raw amino-acid sequence, 4568 residues long: MDSGNESSIIQPPNLKTAAEGDVKEYIVQVVTSHFGLSPRDQTTLDVELTAATTFITDFINEADKNVIVVDRVVAREQGDQPAGAESGGEESAPATFQVHDGLFMTDRGQAMMFVKQSNVIEAEKKIATQVSAFPLNGGSAWEQLHFLMSRLLNPYCKSFIGQSGRGERDGDKLAPTVQKCFTEAEAALLHLQQNIDIPEINLVVNQHILDAIEQAGKENRRAKIEDLGDLVEDANFLNALQSGCNRWVKEIRKVTQLERDPSSGTSLQEMTFWLNLERALLKISQKRDGEEVTLTLEALKCGKRFHATVGFDSDNGLKQKLAVVQDYNTLMKEFPLSELVSATDVPKLMHAVVGIFLHLRKLRSTKYPLQRALRLVEAISRDLNSQLLKVLSSYNLMRTPIAEFNEIMSQCQALFSKWDDEYDKFIALLRDINKKKRDDPSKLSWKVTAVHKRLETRLMQILQFRKQHEQFRTVIERVLRPVGNGSREREQLMIDSSEGEKSPDEQVDIAYEFLKNVDFLDVDSPAWENAFKRYEDQIGVVETAITTRLKSQLESSRNSNEMFSIFSRYNALFIRPRIRGAIYEYQTRLINRVKEDINELQARFTKARGEQGVKIMQTVGLPPFSAKIMWIRNYERQLQRYMKRVEDVLGKQWENHVDGRQLKADGDNFKVKLNTQPMFDEWVESVQSQNWTLPNKILTVDRVQVDGRMQLQLKINYHSDSSVLYKEVSHLKSMGFRVPLKIVNWAHQANQMRPSATSLIEAARTFASVNAALASVQGVDSLLASYKKDIQNQLIEGATLGWDSYKVDQYQLKLAETVNTYQERCEELLNVVRIVNADLNVLKSCRYDKETIENLLTSIQKGVDQLSLGNYSNLAQWVNTLDRQIETILARRVEDAIRVWTLVFSQSEEVEELRERQVVLPTVKNVVVDLCMTAQTLYISPSTRETREKILEQLYEWHSVCTAQMRISGKRFQMVMNEEIEPETYHNILNVMPEGQACLEKAYDCVNGIMSDLEEYLSEWLSYQSLWVLQAEQLFEMLGTSLSKWMKTLMEIRKGRLVFDTQDTRKVIFPVSVEYGKAQQKILFKYDYWHKEMLVKFGAVVGDEMQKFFNSVSKWRNVLETQSVDGGSTSDTIGLISFVQSLKKQTKSGQDAVDLYRSSQRLLNQQRYQFPAQWLYSENVEGEWSAFTEILSLRDASIQTQMMNLQTKFAQEDELVEKRTVETLTEWNKSKPVEGAQRPQEALNVITAFEAKLNKLTEERNKMRKARVALDLSDSAHAPSEGDKLTVATEELAAMKDVWKALQPVYTGIDEAKEKTWLSVQPRKIRQSLDELMNQLKQLPVKCRTYKSYEHVKQMLHTYGKMNMLVAELKSEALKERHWHQMMKEMRVNWNLSDLTLGQVWDADILRHEHTIKKILLVAQGEMALEEFLREMREYWQNYEVELVNYQNKTRLIKGWDDLFNKLKEHQNSLSAMKLSPYYKQFEESAQSWDEKLNKINAMFDVWIDVQRRWVYLEGLFSGSAEISTLLPFESSRFATITTDVLALMKKVAASPRILDVVNMQGAQRLLERLADMLAKIQKALGEYLERERSSFPRFYFVGDEDLLEIMGNSKDITRIQKHLKKMFAGITAIDINEEDRSITAFHSREGEKVDLVKIVSTKDVRINDWLQALEAEMKHTLARQLAASLTHFSKMNIQTMTTDDYVEWLDKFPAQVITLTAEIWWCDEMEKTLADGKGAENVEQAVVKTLELLADSVLKEQPPIRRKKMEALITELVHKRDTCRKLVSMKIRAANDFGWLQCMRFYFDPKQVDPVRCCVVKMANSQFFYGFEYLGIQERLVRTPLTDRCYLTMTQALHSRLGGSPFGPAGTGKTESVKALGHQLGRFVLVFNCDETFDFQAMGRILVGLCQVGAWGCFDEFNRLEERMLSAVSQQIQTIQEAVRAGGDMSVDLVGKRLNVNSNIGIFITMNPGYSGRSNLPDNLKQLFRSLAMTQPDRQLIAQVMLFSQGFRTAETLANKIVPLFILCKEQLSDQCHYDFGLRALKYVLVSAGNIKRDKLDKMGSAALEDVAEQQMLIQSVCETLVPKLVNEDIALLFSLLSDVFPGIHYTANQMRELRQQLSTVCDEHLLIYSDVQGEMGSMWLDKVLQLYQITNLNHGLMLVGSSGSGKTMAWKVLLKALERWENVEGVAHVIDAKAMSKDSLYGVMDPNTREWTDGLFTSVIRKIIDNVRGEADRRQWIIFDGDVDPEWVENLNSVLDDNKLLTLPNGERLSIPPNVRIIFEVADLKYATLATVSRCGMVWFSEEVVTSEMLFERYLSIIRRVPLDSDSAISFSSSSAPVNLIGEDAKPTRSIEIQRTAALALQTHFSPDGIVPGSLKYAVSELEHIMPPTPQRLLSSFFSMMSYSIRKIVSHDEGLIDDSVEIDQIQSFVLRSMLTNLVWAFSGDGKWKSREMMSDFIRQATTISLPPNQQACLIDYEVQLSGDWQPWLSKVPTMEIESHRVAAADLVVPTIDTVRHEMLLAAWLAEHKPLVLCGPPGSGKTMTLLAALRSQQEMEVVNVNFSSSTTPELLLRTFDHYCEYRRTPNGVVLAPVQLSQWLVIFCDEINLPAPDKYGTQRVISFLRQLVELNGFYRTSDHSWVSLERIQFVGACNPPTDPGRHPMTSRFLRHVPIVYVDYPGQTSLQQIYGTFNRAMLKMTPAVRGLADQLTNAMVDVYLASQEHFTQDDQPHYVYSPRELTRWVRGISEAITPLESLSAEQLVRLWAHEAIRLFQDRLVTEEEREWTDKLVDTTAERYFGNACRLDEALKRPLLYSCWLSRNYVPVTREELQDYVSARLKGFYEEELDVKLVLFDQMLDHVLRIDRIYRQSQGHLLLIGTAGAGKTTLSRFVAWLNGLSVFQLKVHSKYTAADFDEDMRTVLRRAGCRNEKLCFIMDESNMLDTGFLERLNTLLANGEVPGLFEGDEHTTLMTQIKEGAQRQGLILDSHDELYKWFTQQVMRNLHVVFTMNPSGSGLRERASTSPALFNRCVLNWFGDWSENALYQVGSELTRTMDLDRTDYEGSVRLTPSCELVPSQPTYRDAVVNTLCLVHKTVQKFNEMETKKGHRVMACTPRHFLDFIKQFMSLFHEKRSDLEEEKIHLNIGLNKISETEEQVKELQKSLKLKSNELQEKKEAANLKLKEMLGDQQKAEEEKKFSEQLQKELAEQLKQMAEKKTFVENDLAQVEPAVAEAQTAVQGIKKSQLVEVKSMSSPPVTVKLTLEAICILLGENVGTDWKAIRQVMMKDDFMTRILQFDTELLTPEILKQMEKYIQNPDWEFDKVNRASVACGPMVKWARAQLLYSTMLHKVEPLRNELKRLEQEAAKKTQEGKVVDVRITELEESIGKYKEEYAQLIGQAENIKQDLLSVQEKVNRSTELLSSLRSERDRWSSGSAGFSQQMDSLVGDALLSSAFLAYAGYYDQMLRDEIFHKWFNHVVNAGLHFRHDLARIEYLSTVDDRLQWQLNSLPVDDLCTENAIMLHRFNRYPLIIDPSGQAVEYIMKQFAGKNIQKTSFLDESFRKNLESALRFGNSLLVQDVEAYDPILNPVLNREVKRAGGRVLITIGDQDIDLSPSFQIFMITRDSTVEFSPDICSRVTFVNFTVTSSSLASQCLNQVLRSERPDVDKKRNDLLKLQGEFAVRLRHLEKALLAALNESKGKILDDNSVIETLEKLKNEAAEVAQKSAETDKVMAEVDAVSAQYQRLSTACSHIYHTLQQLNEIHFLYHYSLDFLVEIFTHVLKTPELSSTTDYAKRLRIITTSLFQTVFRRVSRGMLHTDKVLLALLLMRIHIRSNPSAPAYEQHFDLLLGRSDFVAKNDEADSTIPGGLDFLTVENKKSIAKARKVVGFENVFAHLQHNSAAVTSWLTNDNPESNVPVVWDDADGKLSPLCIAMNSLIVVHALRPDRLMASAHRVVSTAFDDHFMQQDKVVDILSIVDNEVSPSEPVLLCSATGYDASGKIEDLAVETNRQLTSIAIGSAEGFNQADSALGTATKSGRWVLLKNVHLAPSWLAQLEKRLHSMKPHAQFRLFLTAEIHPKLPSSILRASRVVVFEPATGLKANLLRSLSSIPPQRLTKAPTERSRLYLLVCWLHALVQERLRYTPLGWSTAYEFSDADLRVACDTLDAAVDAVAQGRPNVEPERLPWTTLRTLLSQCIYGGKIDNQFDQVLLDCVLENLFTAKSFEQDHVLIPKYDGDDSLFTPNMSKKDQMIGWVEELKNEQLPAWLGLPNNAEKVLLTKRGESMLRNMLKVTDEELAFNEDGKEEVKPQWMAQLGELAKQWLQLLPKEIVKMRRTVENIKDPLFRFFEREVNLGSQLLKDIRRDLNEISAVCRAEKKQNNETRALAASLQKGEVPTGWKRYTVPREVTVMDWMTDLNERLKQLIRIGGADNLKRETFWLGGTFSPEAYITATRQQVAQANTWSLEQLNLHIHIGRTDSTDVFRISGIDIRGAKSVGGNKLELCELVKSECDIVEFSWKQDVADGTRLPLYLYGDRRQLISPLAFHLSSATVFYQRGVALVANSTL.

The interval 1-1826 (MDSGNESSII…VVKMANSQFF (1826 aa)) is stem. Coiled-coil stretches lie at residues 587–652 (QTRL…VLGK), 814–844 (KLAE…NVLK), 1241–1274 (QEAL…LDLS), 1324–1340 (RKIR…LKQL), and 1559–1591 (VNMQ…RERS). AAA stretches follow at residues 1827–2049 (YGFE…VLVS), 2118–2394 (QQLS…PTPQ), 2498–2747 (EIES…WVRG), and 2842–3111 (GFYE…GHRV). ATP contacts are provided by residues 1865 to 1872 (GPAGTGKT), 2163 to 2170 (GSSGSGKT), 2537 to 2544 (GPPGSGKT), and 2880 to 2887 (GTAGAGKT). Coiled coils occupy residues 3132–3229 (EKRS…AQVE), 3339–3432 (ARAQ…RDRW), and 3707–3739 (NSVI…EVDA). The interval 3132–3432 (EKRSDLEEEK…SSLRSERDRW (301 aa)) is stalk. 2 AAA regions span residues 3496–3725 (LSTV…EVAQ) and 3954–4169 (AHRV…TLDA). Residues 4359–4386 (QLLKDIRRDLNEISAVCRAEKKQNNETR) adopt a coiled-coil conformation.

This sequence belongs to the dynein heavy chain family. Consists of at least two heavy chains and a number of intermediate and light chains.

The protein resides in the cytoplasm. Its subcellular location is the cytoskeleton. Its function is as follows. Cytoplasmic dynein acts as a motor for the intracellular retrograde motility of vesicles and organelles along microtubules. Dynein has ATPase activity; the force-producing power stroke is thought to occur on release of ADP. May play a role in nuclear migration in hypodermal precursor cells. May be involved in the transport of synaptic vesicle components towards the axon of the DA motor neuron. This function may involve the regulation of dynein by pct-1 and/or cdk-5. Involved in the formation of synapses in the dorsal region during synaptic remodeling of DD motor neurons. Required for anterograde trafficking of dense-core vesicles in the DB motor neuron dendrites. Required for the formation of dendritic branches of PVD sensory neurons. May also play a role in GABAergic synaptic vesicle localization in the ventral nerve cord. May play a role in the pairing of homologous chromosomes during meiosis. The chain is Dynein heavy chain, cytoplasmic from Caenorhabditis elegans.